The sequence spans 350 residues: MKKIPCVMMRGGTSRGAFLLAEHLPEDQTQRDKILMAIMGSGNDLEIDGIGGGNPLTSKVAIISRSSDPRADVDYLFAQVIVHEQRVDTTPNCGNMLSGVGAFAIENGLIAATSPVTRVRIRNVNTGTFIEADVQTPNGVVEYEGSARIDGVPGTAAPVALTFLNAAGTKTGKVFPTDNQIDYFDDVPVTCIDMAMPVVIIPAEYLGKTGYELPAELDADKALLARIESIRLQAGKAMGLGDVSNMVIPKPVLISPAQKGGAINVRYFMPHSCHRALAITGAIAISSSCALEGTVTRQIVPSVGYGNINIEHPSGALDVHLSNEGQDATTLRASVIRTTRKIFSGEVYLP.

It belongs to the PrpF family.

This chain is Putative isomerase YbhH (ybhH), found in Escherichia coli O6:H1 (strain CFT073 / ATCC 700928 / UPEC).